A 202-amino-acid chain; its full sequence is B-cell CLL/lymphoma 7 protein family member B (202 aa).

Positions 53 to 202 are disordered; that stretch reads DSKEKEKSKS…PVVPQTTSES (150 aa). Positions 90–99 are enriched in polar residues; the sequence is ENSNQSSVSD. Over residues 107-123 the composition is skewed to low complexity; sequence SSTNSSPSPQQSESLSP. 7 positions are modified to phosphoserine: serine 114, serine 118, serine 120, serine 122, serine 127, serine 148, and serine 152.

The protein belongs to the BCL7 family.

Its function is as follows. Positive regulator of apoptosis. Plays a role in the Wnt signaling pathway, negatively regulating the expression of Wnt signaling components CTNNB1 and HMGA1. Involved in cell cycle progression, maintenance of the nuclear structure and stem cell differentiation. May play a role in lung tumor development or progression. The chain is B-cell CLL/lymphoma 7 protein family member B (Bcl7b) from Mus musculus (Mouse).